We begin with the raw amino-acid sequence, 174 residues long: uncharacterized protein (174 aa).

A helical membrane pass occupies residues 126 to 146 (AIDEFIITVIPVVLGSGIPLF).

This sequence to B.subtilis YyaP.

The protein localises to the membrane. This is an uncharacterized protein from Bacillus subtilis (strain 168).